We begin with the raw amino-acid sequence, 383 residues long: Putative F-box/kelch-repeat protein At1g62270 (383 aa).

The 46-residue stretch at 6-51 (TSSFSSLPWDLVEDILARVPATSLKRLRSTCKQWNFLFNDQIFTKM) folds into the F-box domain. Kelch repeat units lie at residues 110–158 (KVFH…YGNY), 160–211 (SCYN…LRGN), and 349–383 (TVYI…LVQI).

This Arabidopsis thaliana (Mouse-ear cress) protein is Putative F-box/kelch-repeat protein At1g62270.